We begin with the raw amino-acid sequence, 425 residues long: 26S proteasome regulatory subunit 7 (425 aa).

208–215 is an ATP binding site; it reads GPPGTGKT.

It belongs to the AAA ATPase family.

It is found in the cytoplasm. The protein resides in the nucleus. Its function is as follows. The 26S proteasome is involved in the ATP-dependent degradation of ubiquitinated proteins. The regulatory (or ATPase) complex confers ATP dependency and substrate specificity to the 26S complex. This is 26S proteasome regulatory subunit 7 (RPT1) from Prunus persica (Peach).